We begin with the raw amino-acid sequence, 371 residues long: MSKRDYYEVLGLSKGASTDEIKKAYRRLAKKYHPDVSKEENAIEKFKEVQEAYEVLSDDQKRAQYDQFGHAGANQGFGGFGGGGDFGGGFGFEDIFSSFFGGGGGRRRDPNAPRQGADLQYQVTLDFEEAIFGKELNVEIPVEDPCDTCKGSGAKPGTSKETCKHCSGSGQVSVEQNTPFGRIVNRQACGHCSGTGQIIKEKCTTCHGSSKVRKRKKINVKIPAGIDNGQQIRVSGKGEAGVNGGPARDLYVVVHVRNHEFFEREGDHIICEMPLTFAQMALGDEVEVPTVHGKVKLKIPAGTQTGTEFRLKGKGAPNVRGYGQGDQYVVVRVVVPTKLTSQQKDLLREFAGQEEQDDSLFGKLKRAFKGE.

The 65-residue stretch at 5-69 (DYYEVLGLSK…QKRAQYDQFG (65 aa)) folds into the J domain. A CR-type zinc finger spans residues 133 to 215 (GKELNVEIPV…CHGSSKVRKR (83 aa)). Positions 146, 149, 163, 166, 189, 192, 203, and 206 each coordinate Zn(2+). CXXCXGXG motif repeat units follow at residues 146–153 (CDTCKGSG), 163–170 (CKHCSGSG), 189–196 (CGHCSGTG), and 203–210 (CTTCHGSS).

This sequence belongs to the DnaJ family. Homodimer. The cofactor is Zn(2+).

It is found in the cytoplasm. Functionally, participates actively in the response to hyperosmotic and heat shock by preventing the aggregation of stress-denatured proteins and by disaggregating proteins, also in an autonomous, DnaK-independent fashion. Unfolded proteins bind initially to DnaJ; upon interaction with the DnaJ-bound protein, DnaK hydrolyzes its bound ATP, resulting in the formation of a stable complex. GrpE releases ADP from DnaK; ATP binding to DnaK triggers the release of the substrate protein, thus completing the reaction cycle. Several rounds of ATP-dependent interactions between DnaJ, DnaK and GrpE are required for fully efficient folding. Also involved, together with DnaK and GrpE, in the DNA replication of plasmids through activation of initiation proteins. The protein is Chaperone protein DnaJ of Bacillus cereus (strain ATCC 14579 / DSM 31 / CCUG 7414 / JCM 2152 / NBRC 15305 / NCIMB 9373 / NCTC 2599 / NRRL B-3711).